Consider the following 245-residue polypeptide: Dof zinc finger protein DOF3.2 (245 aa).

Residues 15-26 are compositionally biased toward polar residues; sequence SCSTQDYQNQKK. A disordered region spans residues 15 to 41; sequence SCSTQDYQNQKKPLSATRPAPPEQSLR. The Dof-type zinc finger occupies 40 to 94; the sequence is LRCPRCDSTNTKFCYYNNYSLSQPRYFCKSCRRYWTKGGILRNIPIGGAYRKHKR. Zn(2+) is bound by residues C42, C45, C67, and C70. Residues 91–118 form a disordered region; the sequence is KHKRSSSATKSLRTTPEPTMTHDGKSFP. Polar residues predominate over residues 96 to 108; it reads SSATKSLRTTPEP.

Interacts with TCP14. The PEAR proteins (e.g. DOF2.4, DOF5.1, DOF3.2, DOF1.1, DOF5.6 and DOF5.3) form a short-range concentration gradient that peaks at protophloem sieve elements (PSE).

The protein resides in the nucleus. Transcription factor that negatively affects seed germination and opposes TCP14 function in the regulation of a specific set of abscisic acid-related genes. The PEAR proteins (e.g. DOF2.4, DOF5.1, DOF3.2, DOF1.1, DOF5.6 and DOF5.3) activate gene expression that promotes radial growth of protophloem sieve elements. The sequence is that of Dof zinc finger protein DOF3.2 from Arabidopsis thaliana (Mouse-ear cress).